A 122-amino-acid chain; its full sequence is Large ribosomal subunit protein uL14 (122 aa).

It belongs to the universal ribosomal protein uL14 family. In terms of assembly, part of the 50S ribosomal subunit. Forms a cluster with proteins L3 and L19. In the 70S ribosome, L14 and L19 interact and together make contacts with the 16S rRNA in bridges B5 and B8.

Its function is as follows. Binds to 23S rRNA. Forms part of two intersubunit bridges in the 70S ribosome. The protein is Large ribosomal subunit protein uL14 of Dehalococcoides mccartyi (strain ATCC BAA-2100 / JCM 16839 / KCTC 5957 / BAV1).